Reading from the N-terminus, the 506-residue chain is Maturase K (506 aa).

The protein belongs to the intron maturase 2 family. MatK subfamily.

The protein localises to the plastid. It localises to the chloroplast. Functionally, usually encoded in the trnK tRNA gene intron. Probably assists in splicing its own and other chloroplast group II introns. This is Maturase K from Trifolium willdenovii (Tomcat clover).